We begin with the raw amino-acid sequence, 399 residues long: Keratin, type I cytoskeletal 19 (399 aa).

Positions 1-78 (MTSYSYRQSS…ATSDGLLAGN (78 aa)) are head. Position 7 is an omega-N-methylarginine (Arg7). 2 positions are modified to phosphoserine: Ser14 and Ser22. Arg24 carries the asymmetric dimethylarginine; alternate modification. Arg24 carries the omega-N-methylarginine; alternate modification. Residue Arg32 is modified to Omega-N-methylarginine. Phosphoserine is present on residues Ser35 and Ser40. Omega-N-methylarginine occurs at positions 43 and 51. 2 positions are modified to phosphoserine: Ser57 and Ser71. Positions 79 to 114 (EKLTMQNLNDRLASYLEKVRALEEANGDLEVKIRDW) are coil 1A. In terms of domain architecture, IF rod spans 79–390 (EKLTMQNLND…NLLEGQDAYF (312 aa)). The tract at residues 115-132 (YQKQGPGPARDYSHYFKT) is linker 1. The segment at 133–224 (IEDLRDQILG…KNHEEEMSVL (92 aa)) is coil 1B. Residues 225–247 (KGQVGGQVSVEVDSAPGIDLAKI) are linker 12. Residues 243–389 (DLAKILSDMR…RNLLEGQDAY (147 aa)) form a necessary for interaction with PNN region. Positions 248–386 (LSDMRSQYEV…ATYRNLLEGQ (139 aa)) are coil 2. Position 322 is a phosphothreonine (Thr322). The tract at residues 387–399 (DAYFNDLSLAKAL) is rod-like helical tail. Ser394 carries the phosphoserine modification.

It belongs to the intermediate filament family. As to quaternary structure, heterotetramer of two type I and two type II keratins. Interacts with PNN and the actin-binding domain of DMD.

Involved in the organization of myofibers. Together with KRT8, helps to link the contractile apparatus to dystrophin at the costameres of striated muscle. The sequence is that of Keratin, type I cytoskeletal 19 (KRT19) from Bos taurus (Bovine).